We begin with the raw amino-acid sequence, 398 residues long: 1-deoxy-D-xylulose 5-phosphate reductoisomerase (398 aa).

The NADPH site is built by Thr10, Gly11, Ser12, Ile13, Gly36, Arg37, Asn38, and Asn124. Lys125 lines the 1-deoxy-D-xylulose 5-phosphate pocket. Glu126 is an NADPH binding site. Asp150 is a Mn(2+) binding site. Residues Ser151, Glu152, Ser186, and His209 each contribute to the 1-deoxy-D-xylulose 5-phosphate site. Glu152 provides a ligand contact to Mn(2+). An NADPH-binding site is contributed by Gly215. 1-deoxy-D-xylulose 5-phosphate contacts are provided by Ser222, Asn227, Lys228, and Glu231. A Mn(2+)-binding site is contributed by Glu231.

It belongs to the DXR family. As to quaternary structure, homodimer. It depends on Mg(2+) as a cofactor. The cofactor is Mn(2+).

It catalyses the reaction 2-C-methyl-D-erythritol 4-phosphate + NADP(+) = 1-deoxy-D-xylulose 5-phosphate + NADPH + H(+). It functions in the pathway isoprenoid biosynthesis; isopentenyl diphosphate biosynthesis via DXP pathway; isopentenyl diphosphate from 1-deoxy-D-xylulose 5-phosphate: step 1/6. In terms of biological role, catalyzes the NADPH-dependent rearrangement and reduction of 1-deoxy-D-xylulose-5-phosphate (DXP) to 2-C-methyl-D-erythritol 4-phosphate (MEP). The chain is 1-deoxy-D-xylulose 5-phosphate reductoisomerase from Yersinia pseudotuberculosis serotype IB (strain PB1/+).